Here is a 217-residue protein sequence, read N- to C-terminus: 3-oxo-tetronate 4-phosphate decarboxylase (217 aa).

The Zn(2+) site is built by His93 and His95. The active-site Proton donor is the Tyr120.

Belongs to the aldolase class II family. AraD/FucA subfamily. Requires Zn(2+) as cofactor.

The enzyme catalyses 3-dehydro-4-O-phospho-D-erythronate + H(+) = dihydroxyacetone phosphate + CO2. The catalysed reaction is 3-dehydro-4-O-phospho-L-erythronate + H(+) = dihydroxyacetone phosphate + CO2. Its function is as follows. Catalyzes the decarboxylation of 3-oxo-tetronate 4-phosphate to dihydroxyacetone phosphate (DHAP) and CO(2). The protein is 3-oxo-tetronate 4-phosphate decarboxylase of Cupriavidus necator (strain ATCC 17699 / DSM 428 / KCTC 22496 / NCIMB 10442 / H16 / Stanier 337) (Ralstonia eutropha).